A 585-amino-acid chain; its full sequence is Sodium/calcium exchanger NCL (585 aa).

The next 5 membrane-spanning stretches (helical) occupy residues 83-103 (VFLILVYGFLMFTAATYLSAG), 106-126 (LLLEILGPGIVGGLFLPMLGA), 149-169 (VSVGMGLLAGSTVMLLTVIWG), 212-232 (IMAISVIPFVIVQLPQMLGST), and 239-259 (VLIALILSVLMLISYCVYQVF). 2 EF-hand domains span residues 299–334 (PDEHVIRKLFLTIDANNDGHLSAAELKALIIGISFE) and 339–374 (DKDDAVGKVLQDFDKTLDEQVDQEEFVRGIKQWLIQ). Positions 312, 314, 316, 318, 323, 352, 356, 358, and 363 each coordinate Ca(2+). Helical transmembrane passes span 427–447 (WITIKAALLLLLGAAIAAAFA) and 457–477 (FSAATGIPSFFISFIALPLAT). A glycan (N-linked (GlcNAc...) asparagine) is linked at asparagine 478. Helical transmembrane passes span 505 to 525 (CGGVTMNNILCLSVFLAIVYV), 532 to 552 (FSSEVLVILIVCLVMGGFASF), and 558 to 578 (LWTCFIAYLLYPFSLGLVYIL).

Belongs to the Ca(2+):cation antiporter (CaCA) (TC 2.A.19) family. In terms of tissue distribution, expressed in roots, leaves, stems, petals, stamens, ovules and siliques.

It localises to the cell membrane. The protein localises to the vacuole membrane. In terms of biological role, possesses sodium/calcium exchanger (NCX) activity when expressed in a heterologous mammalian CHO-K1 cell system. Does not possess cation/proton exchanger (CAX) or sodium/proton (NHX) activity when expressed in a heterologous yeast cell system. Has the ability to bind calcium in vitro. Participates in the maintenance of calcium homeostasis. May play a role in auxin response, diurnal rhythm and flowering time. Involved in salt stress response. The chain is Sodium/calcium exchanger NCL from Arabidopsis thaliana (Mouse-ear cress).